The chain runs to 95 residues: MASGQQQQGRSELDRMAREGQTVVPGGTGGKSLEAQENLAEGRSRGGQTRKEQMGEEGYREMGRKGGLSTGDESGGERAAREGIDIDESKYKTKS.

Positions 1-10 (MASGQQQQGR) are enriched in polar residues. Positions 1–95 (MASGQQQQGR…IDESKYKTKS (95 aa)) are disordered. Composition is skewed to basic and acidic residues over residues 40–64 (AEGR…EMGR) and 75–95 (GGER…KTKS).

The protein belongs to the small hydrophilic plant seed protein family. In terms of tissue distribution, expressed in dry seeds and immature embryos.

Functionally, em protein may act as a cytoplasm protectant during desiccation. The protein is Embryonic abundant protein 1 (EMP1) of Oryza sativa subsp. japonica (Rice).